Reading from the N-terminus, the 190-residue chain is Major intrinsically disordered NOTCH2-binding receptor 1-like (190 aa).

At S79 the chain carries Phosphoserine. Residues N109 and N125 are each glycosylated (N-linked (GlcNAc...) asparagine). The helical transmembrane segment at G169–F189 threads the bilayer.

It belongs to the MINAR family. As to quaternary structure, interacts with NOTCH2. In terms of tissue distribution, highly expressed in the auditory hair cells.

The protein resides in the lysosome membrane. The protein localises to the endoplasmic reticulum membrane. Functionally, binds cholesterol and may regulate the distribution and homeostasis of cholesterol in hair cells. May play a role in angiogenesis. The sequence is that of Major intrinsically disordered NOTCH2-binding receptor 1-like from Homo sapiens (Human).